We begin with the raw amino-acid sequence, 430 residues long: Tol-Pal system protein TolB (430 aa).

The signal sequence occupies residues 1–21; that stretch reads MKQALRVAFGFLILWASVLHA.

This sequence belongs to the TolB family. As to quaternary structure, the Tol-Pal system is composed of five core proteins: the inner membrane proteins TolA, TolQ and TolR, the periplasmic protein TolB and the outer membrane protein Pal. They form a network linking the inner and outer membranes and the peptidoglycan layer.

It localises to the periplasm. Functionally, part of the Tol-Pal system, which plays a role in outer membrane invagination during cell division and is important for maintaining outer membrane integrity. TolB occupies a key intermediary position in the Tol-Pal system because it communicates directly with both membrane-embedded components, Pal in the outer membrane and TolA in the inner membrane. The sequence is that of Tol-Pal system protein TolB from Shigella flexneri serotype 5b (strain 8401).